Consider the following 552-residue polypeptide: MLDHKDLEAEIHPLKNEERKSQENLGNPSKNEDNVKSAPPQSRLSRCRAAAFFLSLFLCLFVVFVVSFVIPCPDRPASQRMWRIDYSAAVIYDFLAVDDINGDRIQDVLFLYKNTNSSNNFSRSCVDEGFSSPCTFAAAVSGANGSTLWERPVAQDVALVECAVPQPRGSEAPSACILVGRPSSFIAVNLFTGETLWNHSSSFSGNASILSPLLQVPDVDGDGAPDLLVLTQEREEVSGHLYSGSTGHQIGLRGSLGVDGESGFLLHVTRTGAHYILFPCASSLCGCSVKGLYEKVTGSGGPFKSDPHWESMLNATTRRMLSHSSGAVRYLMHVPGNAGADVLLVGSEAFVLLDGQELTPRWTPKAAHVLRKPIFGRYKPDTLAVAVENGTGTDRQILFLDLGTGAVLCSLALPSLPGGPLSASLPTADHRSAFFFWGLHELGSTSETETGEARHSLYMFHPTLPRVLLELANVSTHIVAFDAVLFEPSRHAAYILLTGPADSEAPGLVSVIKHKVRDLVPSSRVVRLGEGGPDSDQAIRDRFSRLRYQSEA.

Positions 1-22 (MLDHKDLEAEIHPLKNEERKSQ) are enriched in basic and acidic residues. A disordered region spans residues 1–40 (MLDHKDLEAEIHPLKNEERKSQENLGNPSKNEDNVKSAPP). The Cytoplasmic segment spans residues 1–49 (MLDHKDLEAEIHPLKNEERKSQENLGNPSKNEDNVKSAPPQSRLSRCRA). At Ser-21 the chain carries Phosphoserine. The chain crosses the membrane as a helical; Signal-anchor for type II membrane protein span at residues 50–70 (AAFFLSLFLCLFVVFVVSFVI). At 71–552 (PCPDRPASQR…FSRLRYQSEA (482 aa)) the chain is on the extracellular side. 4 N-linked (GlcNAc...) asparagine glycosylation sites follow: Asn-116, Asn-314, Asn-389, and Asn-473.

Belongs to the FAM234 family.

It is found in the membrane. This is Protein FAM234A from Homo sapiens (Human).